Here is a 63-residue protein sequence, read N- to C-terminus: MKILYLLSAFLFLAFLSESGNAQPQCRWLDGFCHSSPCPSGTTSIGQQDCLWYESCCIPRYEK.

A signal peptide spans 1-22 (MKILYLLSAFLFLAFLSESGNA). 3 disulfides stabilise this stretch: Cys-26/Cys-56, Cys-33/Cys-50, and Cys-38/Cys-57.

In terms of tissue distribution, highly expressed in pancreas, heart, liver, brain and kidney. Expressed to a low extent in the venom gland.

The protein localises to the secreted. The polypeptide is Crotasin (Crotalus durissus terrificus (South American rattlesnake)).